The primary structure comprises 231 residues: GTP cyclohydrolase III (231 aa).

Belongs to the archaeal-type GTP cyclohydrolase family.

It catalyses the reaction GTP + 3 H2O = 2-amino-5-formylamino-6-(5-phospho-D-ribosylamino)pyrimidin-4(3H)-one + 2 phosphate + 2 H(+). In terms of biological role, catalyzes the formation of 2-amino-5-formylamino-6-ribofuranosylamino-4(3H)-pyrimidinone ribonucleotide monophosphate and inorganic phosphate from GTP. Also has an independent pyrophosphate phosphohydrolase activity. The polypeptide is GTP cyclohydrolase III (Saccharolobus solfataricus (strain ATCC 35092 / DSM 1617 / JCM 11322 / P2) (Sulfolobus solfataricus)).